The primary structure comprises 655 residues: p-hydroxybenzoic acid efflux pump subunit AaeB (655 aa).

11 helical membrane-spanning segments follow: residues 13–33, 38–58, 69–89, 93–113, 121–141, 152–172, 370–390, 407–427, 431–451, 459–479, and 482–502; these read FAVKLATAIVLALFVGFHFQL, WAVLTAAIVAAGPAFAAGGEP, LRIIGTFIGCIAGLVIIIAMI, LLMILVCCIWAGFCTWISSLV, WGLAGYTALIIVITIQPEPLL, EIVIGIVCAIMADLLFSPRSI, LFWLWTGWTSGSGAMVMIAVV, FIYGTLAALPLGLLYFLVIIP, QSMLLLCISLAVLGFFLGIEV, MGALASTINIIVLDNPMTFHF, and FLDSALGQIVGCVLAFTVILL.

The protein belongs to the aromatic acid exporter ArAE (TC 2.A.85) family.

It localises to the cell inner membrane. Its function is as follows. Forms an efflux pump with AaeA. Could function as a metabolic relief valve, allowing to eliminate certain compounds when they accumulate to high levels in the cell. The protein is p-hydroxybenzoic acid efflux pump subunit AaeB of Escherichia coli (strain SMS-3-5 / SECEC).